The following is a 124-amino-acid chain: Fluoride-specific ion channel FluC (124 aa).

The next 4 membrane-spanning stretches (helical) occupy residues 2–22, 35–55, 71–91, and 100–120; these read LNIAIAVFIGGGLGSVLRWLI, TGTLVANCIGAFIIAFGIAWF, TGFCGGLTTFSTFSVEVVALF, and LGTMGANLAGSFLMTAFAFWL. Positions 75 and 78 each coordinate Na(+).

Belongs to the fluoride channel Fluc/FEX (TC 1.A.43) family.

It localises to the cell inner membrane. It catalyses the reaction fluoride(in) = fluoride(out). Na(+) is not transported, but it plays an essential structural role and its presence is essential for fluoride channel function. Its function is as follows. Fluoride-specific ion channel. Important for reducing fluoride concentration in the cell, thus reducing its toxicity. The chain is Fluoride-specific ion channel FluC from Proteus mirabilis (strain HI4320).